A 75-amino-acid chain; its full sequence is Translation initiation factor IF-1 (75 aa).

Residues M1–K72 form the S1-like domain.

This sequence belongs to the IF-1 family. Component of the 30S ribosomal translation pre-initiation complex which assembles on the 30S ribosome in the order IF-2 and IF-3, IF-1 and N-formylmethionyl-tRNA(fMet); mRNA recruitment can occur at any time during PIC assembly.

It localises to the cytoplasm. Its function is as follows. One of the essential components for the initiation of protein synthesis. Stabilizes the binding of IF-2 and IF-3 on the 30S subunit to which N-formylmethionyl-tRNA(fMet) subsequently binds. Helps modulate mRNA selection, yielding the 30S pre-initiation complex (PIC). Upon addition of the 50S ribosomal subunit IF-1, IF-2 and IF-3 are released leaving the mature 70S translation initiation complex. In Synechocystis sp. (strain ATCC 27184 / PCC 6803 / Kazusa), this protein is Translation initiation factor IF-1.